A 381-amino-acid chain; its full sequence is MATNIRKTHPLLKIINHALVDLPAPSNISAWWNFGSLLVLCLAVQILTGLFLAMHYTADISLAFSSVIHICRDVNYGWLIRNIHANGASLFFICIYLHIARGLYYGSYLLKETWNIGVILLFLLMATAFVGYVLPWGQMSFWGATVITNLLSAFPYIGDTLVQWIWGGFSIDNATLTRFFAFHFLLPFLIIALTMLHFLFLHETGSNNPLGLNSDMDKIPFHPYFTYKDILGFFTMTLFLGALVLFLPNLLGDAENFIPANPLVTPPHIKPEWYFLFAYAILRSIPNKLGGVLALLFSILMLLLVPFLHTSKQRTNTFRPLTQLLFWTLVANTIILTWIGGQPVEQPFIFIGQIASITYFSLFLIITPFISWCENKILSLN.

The next 4 membrane-spanning stretches (helical) occupy residues 34 to 54, 78 to 99, 114 to 134, and 179 to 199; these read FGSL…FLAM, WLIR…YLHI, WNIG…GYVL, and FFAF…LHFL. Residues histidine 84 and histidine 98 each coordinate heme b. 2 residues coordinate heme b: histidine 183 and histidine 197. An a ubiquinone-binding site is contributed by histidine 202. The next 4 membrane-spanning stretches (helical) occupy residues 227–247, 289–309, 321–341, and 348–368; these read YKDI…VLFL, LGGV…PFLH, LTQL…WIGG, and FIFI…IITP.

It belongs to the cytochrome b family. The cytochrome bc1 complex contains 3 respiratory subunits (MT-CYB, CYC1 and UQCRFS1), 2 core proteins (UQCRC1 and UQCRC2) and probably 6 low-molecular weight proteins. Heme b is required as a cofactor.

It is found in the mitochondrion inner membrane. Component of the ubiquinol-cytochrome c reductase complex (complex III or cytochrome b-c1 complex) that is part of the mitochondrial respiratory chain. The b-c1 complex mediates electron transfer from ubiquinol to cytochrome c. Contributes to the generation of a proton gradient across the mitochondrial membrane that is then used for ATP synthesis. The sequence is that of Cytochrome b (mt-cyb) from Heterodontus francisci (Horn shark).